The sequence spans 531 residues: Lysine--tRNA ligase, mitochondrial (531 aa).

Residues 1–18 (MISRGLLSKGILSIIKRK) constitute a mitochondrion transit peptide.

It belongs to the class-II aminoacyl-tRNA synthetase family.

It localises to the mitochondrion. It carries out the reaction tRNA(Lys) + L-lysine + ATP = L-lysyl-tRNA(Lys) + AMP + diphosphate. The protein is Lysine--tRNA ligase, mitochondrial (msk1) of Schizosaccharomyces pombe (strain 972 / ATCC 24843) (Fission yeast).